Reading from the N-terminus, the 110-residue chain is UPF0122 protein lwe1821 (110 aa).

This sequence belongs to the UPF0122 family.

Its function is as follows. Might take part in the signal recognition particle (SRP) pathway. This is inferred from the conservation of its genetic proximity to ftsY/ffh. May be a regulatory protein. The protein is UPF0122 protein lwe1821 of Listeria welshimeri serovar 6b (strain ATCC 35897 / DSM 20650 / CCUG 15529 / CIP 8149 / NCTC 11857 / SLCC 5334 / V8).